A 126-amino-acid chain; its full sequence is Glycine cleavage system H protein (126 aa).

The region spanning 24-105 (TLTVGITDHA…AYGVWLFKIK (82 aa)) is the Lipoyl-binding domain. At lysine 65 the chain carries N6-lipoyllysine.

The protein belongs to the GcvH family. The glycine cleavage system is composed of four proteins: P, T, L and H. (R)-lipoate is required as a cofactor.

Functionally, the glycine cleavage system catalyzes the degradation of glycine. The H protein shuttles the methylamine group of glycine from the P protein to the T protein. The chain is Glycine cleavage system H protein from Burkholderia cenocepacia (strain ATCC BAA-245 / DSM 16553 / LMG 16656 / NCTC 13227 / J2315 / CF5610) (Burkholderia cepacia (strain J2315)).